A 1487-amino-acid polypeptide reads, in one-letter code: Chromosome partition protein MukB (1487 aa).

ATP is bound at residue 34-41 (GGNGAGKS). Coiled coils occupy residues 297–426 (SSRE…LEKA), 460–666 (ALKH…RLAS), 781–806 (RAAR…AKAA), 836–1111 (EQAL…RTFV), and 1210–1266 (VEAI…LSNI). The tract at residues 667-784 (PGGSNDPRLK…VIPLFGRAAR (118 aa)) is flexible hinge.

The protein belongs to the SMC family. MukB subfamily. As to quaternary structure, homodimerization via its hinge domain. Binds to DNA via its C-terminal region. Interacts, and probably forms a ternary complex, with MukE and MukF via its C-terminal region. The complex formation is stimulated by calcium or magnesium. Interacts with tubulin-related protein FtsZ.

The protein localises to the cytoplasm. It localises to the nucleoid. Its function is as follows. Plays a central role in chromosome condensation, segregation and cell cycle progression. Functions as a homodimer, which is essential for chromosome partition. Involved in negative DNA supercoiling in vivo, and by this means organize and compact chromosomes. May achieve or facilitate chromosome segregation by condensation DNA from both sides of a centrally located replisome during cell division. In Vibrio vulnificus (strain YJ016), this protein is Chromosome partition protein MukB.